The following is a 78-amino-acid chain: MAREITDIKQFLELTRRADVKTATVKINKKLNKAGKPFRQTKFKVRGSSSLYTLVINDAGKAKKLIQSLPPTLKVNRL.

The protein belongs to the eukaryotic ribosomal protein eL38 family. As to quaternary structure, component of the large ribosomal subunit (LSU). Mature yeast ribosomes consist of a small (40S) and a large (60S) subunit. The 40S small subunit contains 1 molecule of ribosomal RNA (18S rRNA) and 33 different proteins (encoded by 57 genes). The large 60S subunit contains 3 rRNA molecules (25S, 5.8S and 5S rRNA) and 46 different proteins (encoded by 81 genes).

The protein resides in the cytoplasm. Its function is as follows. Component of the ribosome, a large ribonucleoprotein complex responsible for the synthesis of proteins in the cell. The small ribosomal subunit (SSU) binds messenger RNAs (mRNAs) and translates the encoded message by selecting cognate aminoacyl-transfer RNA (tRNA) molecules. The large subunit (LSU) contains the ribosomal catalytic site termed the peptidyl transferase center (PTC), which catalyzes the formation of peptide bonds, thereby polymerizing the amino acids delivered by tRNAs into a polypeptide chain. The nascent polypeptides leave the ribosome through a tunnel in the LSU and interact with protein factors that function in enzymatic processing, targeting, and the membrane insertion of nascent chains at the exit of the ribosomal tunnel. This is Large ribosomal subunit protein eL38 from Saccharomyces cerevisiae (strain ATCC 204508 / S288c) (Baker's yeast).